A 126-amino-acid chain; its full sequence is Fluoride-specific ion channel FluC 1 (126 aa).

3 consecutive transmembrane segments (helical) span residues 37–57 (HWGT…VLAL), 67–87 (IALL…TFVV), and 98–118 (LLAA…AAAA). Na(+)-binding residues include G77 and S80.

This sequence belongs to the fluoride channel Fluc/FEX (TC 1.A.43) family.

The protein localises to the cell inner membrane. It catalyses the reaction fluoride(in) = fluoride(out). Its activity is regulated as follows. Na(+) is not transported, but it plays an essential structural role and its presence is essential for fluoride channel function. Fluoride-specific ion channel. Important for reducing fluoride concentration in the cell, thus reducing its toxicity. In Parasynechococcus marenigrum (strain WH8102), this protein is Fluoride-specific ion channel FluC 1.